Here is a 230-residue protein sequence, read N- to C-terminus: UPF0173 metal-dependent hydrolase OEOE_1287 (230 aa).

This sequence belongs to the UPF0173 family.

The chain is UPF0173 metal-dependent hydrolase OEOE_1287 from Oenococcus oeni (strain ATCC BAA-331 / PSU-1).